We begin with the raw amino-acid sequence, 309 residues long: Ribonuclease Z (309 aa).

His-63, His-65, Asp-67, His-68, His-145, Asp-216, and His-274 together coordinate Zn(2+). Catalysis depends on Asp-67, which acts as the Proton acceptor.

Belongs to the RNase Z family. Homodimer. Requires Zn(2+) as cofactor.

The enzyme catalyses Endonucleolytic cleavage of RNA, removing extra 3' nucleotides from tRNA precursor, generating 3' termini of tRNAs. A 3'-hydroxy group is left at the tRNA terminus and a 5'-phosphoryl group is left at the trailer molecule.. Its function is as follows. Zinc phosphodiesterase, which displays some tRNA 3'-processing endonuclease activity. Probably involved in tRNA maturation, by removing a 3'-trailer from precursor tRNA. In Streptococcus pneumoniae (strain 70585), this protein is Ribonuclease Z.